We begin with the raw amino-acid sequence, 347 residues long: Phosphate acyltransferase (347 aa).

Belongs to the PlsX family. In terms of assembly, homodimer. Probably interacts with PlsY.

Its subcellular location is the cytoplasm. It catalyses the reaction a fatty acyl-[ACP] + phosphate = an acyl phosphate + holo-[ACP]. Its pathway is lipid metabolism; phospholipid metabolism. Catalyzes the reversible formation of acyl-phosphate (acyl-PO(4)) from acyl-[acyl-carrier-protein] (acyl-ACP). This enzyme utilizes acyl-ACP as fatty acyl donor, but not acyl-CoA. In Sinorhizobium medicae (strain WSM419) (Ensifer medicae), this protein is Phosphate acyltransferase.